The sequence spans 412 residues: CCA-adding enzyme (412 aa).

2 residues coordinate ATP: Ser41 and Lys44. Ser41 and Lys44 together coordinate CTP. Asp53, Asp55, and Asp106 together coordinate Mg(2+). Residues His129, Lys149, and Tyr158 each coordinate ATP. 3 residues coordinate CTP: His129, Lys149, and Tyr158.

Belongs to the tRNA nucleotidyltransferase/poly(A) polymerase family. Archaeal CCA-adding enzyme subfamily. In terms of assembly, homodimer. Forms a tetramer upon binding two tRNAs. However, tRNA-induced tetramer formation is not required for CCA addition. Mg(2+) serves as cofactor.

The enzyme catalyses a tRNA precursor + 2 CTP + ATP = a tRNA with a 3' CCA end + 3 diphosphate. It catalyses the reaction a tRNA with a 3' CCA end + 2 CTP + ATP = a tRNA with a 3' CCACCA end + 3 diphosphate. Catalyzes the addition and repair of the essential 3'-terminal CCA sequence in tRNAs without using a nucleic acid template. Adds these three nucleotides in the order of C, C, and A to the tRNA nucleotide-73, using CTP and ATP as substrates and producing inorganic pyrophosphate. tRNA 3'-terminal CCA addition is required both for tRNA processing and repair. Also involved in tRNA surveillance by mediating tandem CCA addition to generate a CCACCA at the 3' terminus of unstable tRNAs. While stable tRNAs receive only 3'-terminal CCA, unstable tRNAs are marked with CCACCA and rapidly degraded. The structural flexibility of RNA controls the choice between CCA versus CCACCA addition: following the first CCA addition cycle, nucleotide-binding to the active site triggers a clockwise screw motion, producing torque on the RNA. This ejects stable RNAs, whereas unstable RNAs are refolded while bound to the enzyme and subjected to a second CCA catalytic cycle. The protein is CCA-adding enzyme of Saccharolobus shibatae (strain ATCC 51178 / DSM 5389 / JCM 8931 / NBRC 15437 / B12) (Sulfolobus shibatae).